The sequence spans 370 residues: Protein STRICTOSIDINE SYNTHASE-LIKE 9 (370 aa).

An N-terminal signal peptide occupies residues 1-26; sequence MPINQKIPTWFAVPAVFAVLSVISYQ. N-linked (GlcNAc...) asparagine glycosylation is found at Asn-97 and Asn-171.

Belongs to the strictosidine synthase family.

The protein resides in the vacuole. This Arabidopsis thaliana (Mouse-ear cress) protein is Protein STRICTOSIDINE SYNTHASE-LIKE 9.